The primary structure comprises 481 residues: Phospho-2-dehydro-3-deoxyheptonate aldolase (481 aa).

The tract at residues 1-22 (MSQQTTPNAPGWAPDSWRSKPI) is disordered.

It belongs to the class-II DAHP synthase family. As to quaternary structure, homodimer. The N-terminus is blocked.

It carries out the reaction D-erythrose 4-phosphate + phosphoenolpyruvate + H2O = 7-phospho-2-dehydro-3-deoxy-D-arabino-heptonate + phosphate. It functions in the pathway metabolic intermediate biosynthesis; chorismate biosynthesis; chorismate from D-erythrose 4-phosphate and phosphoenolpyruvate: step 1/7. In Neurospora crassa (strain ATCC 24698 / 74-OR23-1A / CBS 708.71 / DSM 1257 / FGSC 987), this protein is Phospho-2-dehydro-3-deoxyheptonate aldolase (aro-8).